A 320-amino-acid chain; its full sequence is GTP 3',8-cyclase (320 aa).

In terms of domain architecture, Radical SAM core spans 4–227 (LYSRRINYMR…METEKSSPAK (224 aa)). A GTP-binding site is contributed by R13. 2 residues coordinate [4Fe-4S] cluster: C20 and C24. Y26 serves as a coordination point for S-adenosyl-L-methionine. C27 lines the [4Fe-4S] cluster pocket. A GTP-binding site is contributed by R63. Residue G67 coordinates S-adenosyl-L-methionine. T94 provides a ligand contact to GTP. S118 is an S-adenosyl-L-methionine binding site. GTP is bound at residue K155. M189 is a binding site for S-adenosyl-L-methionine. Residues C249 and C252 each coordinate [4Fe-4S] cluster. 254 to 256 (RVR) is a binding site for GTP. [4Fe-4S] cluster is bound at residue C266. Residues 300–312 (KHDLLTDSHEESN) are compositionally biased toward basic and acidic residues. Residues 300 to 320 (KHDLLTDSHEESNRGMSQIGG) form a disordered region.

This sequence belongs to the radical SAM superfamily. MoaA family. In terms of assembly, monomer and homodimer. The cofactor is [4Fe-4S] cluster.

It carries out the reaction GTP + AH2 + S-adenosyl-L-methionine = (8S)-3',8-cyclo-7,8-dihydroguanosine 5'-triphosphate + 5'-deoxyadenosine + L-methionine + A + H(+). The protein operates within cofactor biosynthesis; molybdopterin biosynthesis. In terms of biological role, catalyzes the cyclization of GTP to (8S)-3',8-cyclo-7,8-dihydroguanosine 5'-triphosphate. In Alkaliphilus oremlandii (strain OhILAs) (Clostridium oremlandii (strain OhILAs)), this protein is GTP 3',8-cyclase.